Consider the following 295-residue polypeptide: Shikimate dehydrogenase (NADP(+)) (295 aa).

Shikimate-binding positions include 21 to 23 and T68; that span reads SLS. K72 functions as the Proton acceptor in the catalytic mechanism. Shikimate is bound by residues N93 and D108. Residues 132 to 136, 156 to 161, and L228 contribute to the NADP(+) site; these read GAGGA and NRTPER. Y230 serves as a coordination point for shikimate. Residue G251 coordinates NADP(+).

The protein belongs to the shikimate dehydrogenase family. As to quaternary structure, homodimer.

It catalyses the reaction shikimate + NADP(+) = 3-dehydroshikimate + NADPH + H(+). The protein operates within metabolic intermediate biosynthesis; chorismate biosynthesis; chorismate from D-erythrose 4-phosphate and phosphoenolpyruvate: step 4/7. Its function is as follows. Involved in the biosynthesis of the chorismate, which leads to the biosynthesis of aromatic amino acids. Catalyzes the reversible NADPH linked reduction of 3-dehydroshikimate (DHSA) to yield shikimate (SA). The polypeptide is Shikimate dehydrogenase (NADP(+)) (Moorella thermoacetica (strain ATCC 39073 / JCM 9320)).